We begin with the raw amino-acid sequence, 368 residues long: Agmatine deiminase (368 aa).

C357 functions as the Amidino-cysteine intermediate in the catalytic mechanism.

Belongs to the agmatine deiminase family. As to quaternary structure, homodimer.

It catalyses the reaction agmatine + H2O = N-carbamoylputrescine + NH4(+). The protein operates within amine and polyamine biosynthesis; putrescine biosynthesis via agmatine pathway; N-carbamoylputrescine from agmatine: step 1/1. Its function is as follows. Mediates the hydrolysis of agmatine into N-carbamoylputrescine in the arginine decarboxylase (ADC) pathway of putrescine biosynthesis, a basic polyamine. This is Agmatine deiminase from Pseudomonas fluorescens (strain ATCC BAA-477 / NRRL B-23932 / Pf-5).